The primary structure comprises 255 residues: 2-dehydro-3,6-dideoxy-6-sulfogluconate aldolase (255 aa).

The active-site Proton acceptor is histidine 38. 2 residues coordinate a divalent metal cation: glutamate 141 and aspartate 167.

It belongs to the HpcH/HpaI aldolase family. In terms of assembly, homohexamer; trimer of dimers. A divalent metal cation is required as a cofactor.

The catalysed reaction is 2-dehydro-3,6-dideoxy-6-sulfo-D-gluconate = (2S)-3-sulfolactaldehyde + pyruvate. In terms of biological role, catalyzes the retro-aldol cleavage of 2-dehydro-3,6-dideoxy-6-sulfo-D-gluconate to (2S)-3-sulfolactaldehyde and pyruvate. Is involved in a degradation pathway of sulfoquinovose (SQ) that allows P.putida SQ1 to use SQ as the sole carbon and energy source for growth. The sequence is that of 2-dehydro-3,6-dideoxy-6-sulfogluconate aldolase from Pseudomonas putida (Arthrobacter siderocapsulatus).